Consider the following 379-residue polypeptide: CCN family member 1 (379 aa).

The first 24 residues, 1–24, serve as a signal peptide directing secretion; sequence MSSSTIKTLAVAVTLLHLTRLALS. Residues 25-94 form the IGFBP N-terminal domain; sequence TCPAACHCPL…TALKGICRAQ (70 aa). 6 disulfide bridges follow: Cys-26–Cys-50, Cys-30–Cys-52, Cys-32–Cys-53, Cys-39–Cys-56, Cys-64–Cys-78, and Cys-70–Cys-91. A VWFC domain is found at 98 to 164; it reads RPCEYNSRIY…GQCCEEWVCD (67 aa). At Ser-184 the chain carries Phosphoserine. Residues 226–271 form the TSP type-1 domain; that stretch reads KCIVQTTSWSQCSKSCGTGISTRVTNDNSECRLVKETRICEVRPCG. The tract at residues 277 to 313 is heparin-binding; the sequence is SLKKGKKCSKTKKSPEPVRFTYAGCSSVKKYRPKYCG. 5 cysteine pairs are disulfide-bonded: Cys-284-Cys-321, Cys-301-Cys-335, Cys-312-Cys-351, Cys-315-Cys-353, and Cys-320-Cys-357. In terms of domain architecture, CTCK spans 284–358; that stretch reads CSKTKKSPEP…QSCKCNYNCP (75 aa).

This sequence belongs to the CCN family. Interaction with integrins is heparin- and cell-type-dependent and promotes cell adhesion.

It localises to the secreted. Functionally, promotes cell proliferation, chemotaxis, angiogenesis and cell adhesion. Appears to play a role in wound healing by up-regulating, in skin fibroblasts, the expression of a number of genes involved in angiogenesis, inflammation and matrix remodeling including VEGA-A, VEGA-C, MMP1, MMP3, TIMP1, uPA, PAI-1 and integrins alpha-3 and alpha-5. CCN1-mediated gene regulation is dependent on heparin-binding. Down-regulates the expression of alpha-1 and alpha-2 subunits of collagen type-1. Promotes cell adhesion and adhesive signaling through integrin alpha-6/beta-1, cell migration through integrin alpha-1/beta-5 and cell proliferation through integrin alpha-v/beta-3. The chain is CCN family member 1 from Rattus norvegicus (Rat).